The chain runs to 137 residues: Ribonuclease VapC18 (137 aa).

In terms of domain architecture, PINc spans 4-126; that stretch reads CVDTSAWHHA…YDRVAAITGQ (123 aa). Mg(2+) is bound by residues D6 and D96.

This sequence belongs to the PINc/VapC protein family. It depends on Mg(2+) as a cofactor.

Toxic component of a type II toxin-antitoxin (TA) system. An RNase. The cognate antitoxin is VapB18. The chain is Ribonuclease VapC18 from Mycobacterium tuberculosis (strain ATCC 25618 / H37Rv).